The following is a 25-amino-acid chain: Cytochrome c oxidase subunit 1 (25 aa).

This sequence belongs to the heme-copper respiratory oxidase family. Cu(2+) is required as a cofactor. Requires heme as cofactor.

It is found in the cell inner membrane. It carries out the reaction 4 Fe(II)-[cytochrome c] + O2 + 8 H(+)(in) = 4 Fe(III)-[cytochrome c] + 2 H2O + 4 H(+)(out). It participates in energy metabolism; oxidative phosphorylation. Subunit I and II form the functional core of the enzyme complex. Electrons originating in cytochrome c are transferred via heme a and Cu(A) to the binuclear center formed by heme a3 and Cu(B). This cytochrome c oxidase shows proton pump activity across the membrane in addition to the electron transfer. The protein is Cytochrome c oxidase subunit 1 (ctaD) of Paracoccus versutus (Thiobacillus versutus).